Reading from the N-terminus, the 167-residue chain is Brain ribonuclease (167 aa).

A signal peptide spans 1-26 (MALKSLVLLSLLVLVLLLVQVQPSLG). K33 and R36 together coordinate substrate. H38 serves as the catalytic Proton acceptor. Disulfide bonds link C52–C110, C66–C121, C84–C136, and C91–C98. 67–71 (KPVNT) is a binding site for substrate. Residue N88 is glycosylated (N-linked (GlcNAc...) asparagine). Substrate contacts are provided by K92 and R111. H145 serves as the catalytic Proton donor. O-linked (GalNAc...) threonine glycosylation occurs at T155. S159 carries O-linked (GalNAc...) serine glycosylation.

The protein belongs to the pancreatic ribonuclease family.

The protein resides in the secreted. The sequence is that of Brain ribonuclease (BRN) from Bos taurus (Bovine).